The following is a 213-amino-acid chain: Kynurenine formamidase (213 aa).

W18 is a binding site for substrate. Residues H48, H52, and D54 each coordinate Zn(2+). H58 acts as the Proton donor/acceptor in catalysis. Positions 160 and 172 each coordinate Zn(2+).

It belongs to the Cyclase 1 superfamily. KynB family. In terms of assembly, homodimer. The cofactor is Zn(2+).

It carries out the reaction N-formyl-L-kynurenine + H2O = L-kynurenine + formate + H(+). Its pathway is amino-acid degradation; L-tryptophan degradation via kynurenine pathway; L-kynurenine from L-tryptophan: step 2/2. Catalyzes the hydrolysis of N-formyl-L-kynurenine to L-kynurenine, the second step in the kynurenine pathway of tryptophan degradation. In Burkholderia cenocepacia (strain HI2424), this protein is Kynurenine formamidase.